Here is a 191-residue protein sequence, read N- to C-terminus: MEPIRVIESRTVVLPRENVDTDQIIPARFLKVTDKKGLGKALFSDWRYAADGAPRPDFVMNRPEAQGCSILVAGDNFGCGSSREHAPWALVDAGVRAVISTRIADIFRNNALKNGLVPVVLDAASHAKLLAAPGASVRVDVEAQTVTLPDGSTARFPLDGFARYCLLNGVDELGFLLAQEADIAAFEGGRR.

The protein belongs to the LeuD family. LeuD type 1 subfamily. As to quaternary structure, heterodimer of LeuC and LeuD.

It carries out the reaction (2R,3S)-3-isopropylmalate = (2S)-2-isopropylmalate. The protein operates within amino-acid biosynthesis; L-leucine biosynthesis; L-leucine from 3-methyl-2-oxobutanoate: step 2/4. Catalyzes the isomerization between 2-isopropylmalate and 3-isopropylmalate, via the formation of 2-isopropylmaleate. This is 3-isopropylmalate dehydratase small subunit from Anaeromyxobacter sp. (strain K).